Reading from the N-terminus, the 226-residue chain is Ribosomal RNA large subunit methyltransferase E (226 aa).

Gly82, Trp84, Asp100, Asp116, and Asp140 together coordinate S-adenosyl-L-methionine. Lys180 serves as the catalytic Proton acceptor.

The protein belongs to the class I-like SAM-binding methyltransferase superfamily. RNA methyltransferase RlmE family.

The protein localises to the cytoplasm. It carries out the reaction uridine(2552) in 23S rRNA + S-adenosyl-L-methionine = 2'-O-methyluridine(2552) in 23S rRNA + S-adenosyl-L-homocysteine + H(+). Specifically methylates the uridine in position 2552 of 23S rRNA at the 2'-O position of the ribose in the fully assembled 50S ribosomal subunit. The protein is Ribosomal RNA large subunit methyltransferase E of Caulobacter sp. (strain K31).